A 145-amino-acid polypeptide reads, in one-letter code: [Ribosomal protein bS18]-alanine N-acetyltransferase (145 aa).

The N-acetyltransferase domain maps to 1-145 (MIETIVEQDF…ENAVIMALYL (145 aa)). 67 to 69 (LAV) serves as a coordination point for acetyl-CoA. Glutamate 101 serves as the catalytic Proton acceptor. Asparagine 106 contributes to the acetyl-CoA binding site. Tyrosine 113 serves as the catalytic Proton donor.

This sequence belongs to the acetyltransferase family. RimI subfamily.

The protein localises to the cytoplasm. The catalysed reaction is N-terminal L-alanyl-[ribosomal protein bS18] + acetyl-CoA = N-terminal N(alpha)-acetyl-L-alanyl-[ribosomal protein bS18] + CoA + H(+). Functionally, acetylates the N-terminal alanine of ribosomal protein bS18. In Haemophilus ducreyi (strain 35000HP / ATCC 700724), this protein is [Ribosomal protein bS18]-alanine N-acetyltransferase.